Consider the following 344-residue polypeptide: S-adenosylmethionine:tRNA ribosyltransferase-isomerase (344 aa).

It belongs to the QueA family. Monomer.

It localises to the cytoplasm. It catalyses the reaction 7-aminomethyl-7-carbaguanosine(34) in tRNA + S-adenosyl-L-methionine = epoxyqueuosine(34) in tRNA + adenine + L-methionine + 2 H(+). It functions in the pathway tRNA modification; tRNA-queuosine biosynthesis. Transfers and isomerizes the ribose moiety from AdoMet to the 7-aminomethyl group of 7-deazaguanine (preQ1-tRNA) to give epoxyqueuosine (oQ-tRNA). In Rhizorhabdus wittichii (strain DSM 6014 / CCUG 31198 / JCM 15750 / NBRC 105917 / EY 4224 / RW1) (Sphingomonas wittichii), this protein is S-adenosylmethionine:tRNA ribosyltransferase-isomerase.